The sequence spans 161 residues: CASP-like protein 1C2 (161 aa).

Over 1–7 (MAKNTDR) the chain is Cytoplasmic. Residues 8–28 (ICFLVLRLLAFGATLSAAIVM) form a helical membrane-spanning segment. The Extracellular portion of the chain corresponds to 29 to 53 (ATSHERTTYLSLSIEAKYSHTPAFK). The helical transmembrane segment at 54–74 (YFVIANAIGSAYSLLLLFLPS) threads the bilayer. The Cytoplasmic segment spans residues 75-86 (HGSLWPLVIASD). Residues 87 to 107 (VVITMFLTSSISAALSIAYVG) traverse the membrane as a helical segment. The Extracellular portion of the chain corresponds to 108-131 (KKGNSYAGWLPICDQVPNYCNHVT). Residues 132 to 152 (GALAAGFIGVVLYMVLLQYSI) traverse the membrane as a helical segment. Topologically, residues 153-161 (YTKCCKSSS) are cytoplasmic.

This sequence belongs to the Casparian strip membrane proteins (CASP) family. In terms of assembly, homodimer and heterodimers.

The protein localises to the cell membrane. This is CASP-like protein 1C2 from Vitis vinifera (Grape).